We begin with the raw amino-acid sequence, 299 residues long: Probable alpha-L-glutamate ligase (299 aa).

Residues 112 to 294 (LQLLTEQGIA…IALQMIVHIE (183 aa)) enclose the ATP-grasp domain. Residues Lys-148, 185–186 (DF), Asp-194, and 218–220 (RAN) each bind ATP. 3 residues coordinate Mg(2+): Asp-255, Glu-267, and Asn-269. Residues Asp-255, Glu-267, and Asn-269 each contribute to the Mn(2+) site.

This sequence belongs to the RimK family. Mg(2+) serves as cofactor. Mn(2+) is required as a cofactor.

The polypeptide is Probable alpha-L-glutamate ligase (Histophilus somni (strain 129Pt) (Haemophilus somnus)).